The chain runs to 336 residues: Anthranilate phosphoribosyltransferase (336 aa).

5-phospho-alpha-D-ribose 1-diphosphate contacts are provided by residues G82, G85–D86, T90, N92–T95, K110–S118, and S122. G82 is an anthranilate binding site. S94 contacts Mg(2+). Residue N113 participates in anthranilate binding. Anthranilate is bound at residue R168. 2 residues coordinate Mg(2+): D227 and E228.

This sequence belongs to the anthranilate phosphoribosyltransferase family. Homodimer. Mg(2+) is required as a cofactor.

The enzyme catalyses N-(5-phospho-beta-D-ribosyl)anthranilate + diphosphate = 5-phospho-alpha-D-ribose 1-diphosphate + anthranilate. Its pathway is amino-acid biosynthesis; L-tryptophan biosynthesis; L-tryptophan from chorismate: step 2/5. Catalyzes the transfer of the phosphoribosyl group of 5-phosphorylribose-1-pyrophosphate (PRPP) to anthranilate to yield N-(5'-phosphoribosyl)-anthranilate (PRA). The sequence is that of Anthranilate phosphoribosyltransferase from Leptospira interrogans serogroup Icterohaemorrhagiae serovar copenhageni (strain Fiocruz L1-130).